Reading from the N-terminus, the 1234-residue chain is ATP-dependent helicase/nuclease subunit A (1234 aa).

Residues T2–T475 form the UvrD-like helicase ATP-binding domain. A23 to T30 provides a ligand contact to ATP. The UvrD-like helicase C-terminal domain maps to Y507 to G806.

Belongs to the helicase family. AddA subfamily. As to quaternary structure, heterodimer of AddA and AddB/RexB. Mg(2+) serves as cofactor.

It carries out the reaction Couples ATP hydrolysis with the unwinding of duplex DNA by translocating in the 3'-5' direction.. The enzyme catalyses ATP + H2O = ADP + phosphate + H(+). Functionally, the heterodimer acts as both an ATP-dependent DNA helicase and an ATP-dependent, dual-direction single-stranded exonuclease. Recognizes the chi site generating a DNA molecule suitable for the initiation of homologous recombination. The AddA nuclease domain is required for chi fragment generation; this subunit has the helicase and 3' -&gt; 5' nuclease activities. In Lacticaseibacillus casei (strain BL23) (Lactobacillus casei), this protein is ATP-dependent helicase/nuclease subunit A.